The primary structure comprises 502 residues: Probable cytosol aminopeptidase (502 aa).

2 residues coordinate Mn(2+): K269 and D274. K281 is a catalytic residue. Mn(2+) contacts are provided by D292, D351, and E353. The active site involves R355.

This sequence belongs to the peptidase M17 family. Mn(2+) serves as cofactor.

The protein localises to the cytoplasm. It catalyses the reaction Release of an N-terminal amino acid, Xaa-|-Yaa-, in which Xaa is preferably Leu, but may be other amino acids including Pro although not Arg or Lys, and Yaa may be Pro. Amino acid amides and methyl esters are also readily hydrolyzed, but rates on arylamides are exceedingly low.. It carries out the reaction Release of an N-terminal amino acid, preferentially leucine, but not glutamic or aspartic acids.. Its function is as follows. Presumably involved in the processing and regular turnover of intracellular proteins. Catalyzes the removal of unsubstituted N-terminal amino acids from various peptides. This Photobacterium profundum (strain SS9) protein is Probable cytosol aminopeptidase.